The sequence spans 167 residues: Phosphopantetheine adenylyltransferase (167 aa).

Serine 8 lines the substrate pocket. Residues 8–9 and histidine 16 contribute to the ATP site; that span reads SF. The substrate site is built by lysine 40, leucine 74, and arginine 88. ATP is bound by residues 89 to 91, glutamate 99, and 123 to 129; these read GLR and WSFVSSS.

It belongs to the bacterial CoaD family. As to quaternary structure, homohexamer. Mg(2+) is required as a cofactor.

Its subcellular location is the cytoplasm. It catalyses the reaction (R)-4'-phosphopantetheine + ATP + H(+) = 3'-dephospho-CoA + diphosphate. The protein operates within cofactor biosynthesis; coenzyme A biosynthesis; CoA from (R)-pantothenate: step 4/5. Its function is as follows. Reversibly transfers an adenylyl group from ATP to 4'-phosphopantetheine, yielding dephospho-CoA (dPCoA) and pyrophosphate. The chain is Phosphopantetheine adenylyltransferase from Deinococcus radiodurans (strain ATCC 13939 / DSM 20539 / JCM 16871 / CCUG 27074 / LMG 4051 / NBRC 15346 / NCIMB 9279 / VKM B-1422 / R1).